A 139-amino-acid chain; its full sequence is Ribonuclease P/MRP protein subunit POP5 (139 aa).

The protein belongs to the eukaryotic/archaeal RNase P protein component 2 family.

Its subcellular location is the nucleus. It carries out the reaction Endonucleolytic cleavage of RNA, removing 5'-extranucleotides from tRNA precursor.. Component of ribonuclease P, a protein complex that generates mature tRNA molecules by cleaving their 5'-ends. Also a component of RNase MRP, which cleaves pre-rRNA sequences. This chain is Ribonuclease P/MRP protein subunit POP5, found in Schizosaccharomyces pombe (strain 972 / ATCC 24843) (Fission yeast).